An 81-amino-acid polypeptide reads, in one-letter code: Serine/arginine-rich splicing factor 6 (81 aa).

Positions 1–48 (RSRSRSRRSSRSRSRSISKSRSRSRSRSKGRSRSRSKGRKSRSKSKSK) are enriched in basic residues. The interval 1-81 (RSRSRSRRSS…SRSRSRSRSP (81 aa)) is disordered. Basic and acidic residues predominate over residues 62–71 (RSKDEYEKSR). Over residues 72–81 (SRSRSRSRSP) the composition is skewed to basic residues.

Belongs to the splicing factor SR family. Binds SREK1/SFRS12. Interacts with DYRK1A. Post-translationally, extensively phosphorylated on serine residues in the RS domain. Phosphorylated by DYRK1A, probably in the RS domain. Phosphorylation by DYRK1A modulates alternative splice site selection and inhibits the expression of MAPT/Tau exon 10.

It is found in the nucleus. The protein resides in the nucleus speckle. Its function is as follows. Plays a role in constitutive splicing and modulates the selection of alternative splice sites. Plays a role in the alternative splicing of MAPT/Tau exon 10. Binds to alternative exons of TNC pre-mRNA and promotes the expression of alternatively spliced TNC. Plays a role in wound healing and in the regulation of keratinocyte differentiation and proliferation via its role in alternative splicing. This is Serine/arginine-rich splicing factor 6 (SRSF6) from Oryctolagus cuniculus (Rabbit).